The chain runs to 532 residues: NMDA receptor synaptonuclear signaling and neuronal migration factor (532 aa).

G2 carries N-myristoyl glycine lipidation. The segment at 2–235 is necessary and sufficient to elicit dendritic processes and synaptic contacts; sequence GAAASRRRAL…FSFQTATTTM (234 aa). Disordered regions lie at residues 34–67 and 127–174; these read SQSH…APHN and RRQR…GCAK. Over residues 38-48 the composition is skewed to basic and acidic residues; that stretch reads PENRNGADHLL. Over residues 127–139 the composition is skewed to basic residues; it reads RRQRERHPHHHSQ. The span at 155 to 164 shows a compositional bias: polar residues; that stretch reads PCQSWAGSRQ. S206 bears the Phosphoserine mark. Residues 247–252 carry the Nuclear localization signal motif; sequence RKRRKR. The disordered stretch occupies residues 275 to 315; the sequence is RVKAQTFAERRERSFSRSWSDPTPMKADTSHDSRDSSDLQS. Residues S292 and S294 each carry the phosphoserine modification. Positions 302–311 are enriched in basic and acidic residues; the sequence is DTSHDSRDSS.

This sequence belongs to the NSMF family. Interacts with KPNA1; the interaction occurs in a calcium-independent manner after synaptic NMDA receptor stimulation and is required for nuclear import of NSMF but is competed by CABP1. Interacts (via the central NLS-containing motif region) with CABP1 (via EF-hands 1 and 2); the interaction occurs in a calcium-dependent manner after synaptic NMDA receptor stimulation and prevents the nuclear import of NSMF. Cannot be competed by calmodulin. In terms of processing, proteolytically processed after NMDA receptor activation. Cleaved in a calcium-dependent and calpain-sensitive manner. Calpain cleavage is essential for the translocation process from dendrites to the nucleus. Expressed in the radiatum and pyramidale strata of the hippocampus (at protein level). Strongly expressed in the brain. Expressed in the sensory and motor cortex, hippocampus, olfactory bulb, thalamus and amygdala. In the olfactory bulb expressed in the granular cell layer, mitral cell layer and the glomerular layer. In the hippocampus highly expressed in the regions associated with neuronal cell types as CA1, CA2, CA3 and granule cells of the dentate gyrus. All isoforms have been detected in the molecular layers of the hippocampus.

The protein localises to the nucleus. Its subcellular location is the nucleus envelope. It localises to the nucleus membrane. It is found in the nucleus matrix. The protein resides in the cytoplasm. The protein localises to the cell cortex. Its subcellular location is the cytoskeleton. It localises to the cell membrane. It is found in the cell projection. The protein resides in the dendrite. The protein localises to the synapse. Its subcellular location is the synaptosome. It localises to the postsynaptic density. It is found in the membrane. In terms of biological role, couples NMDA-sensitive glutamate receptor signaling to the nucleus and triggers long-lasting changes in the cytoarchitecture of dendrites and spine synapse processes. Part of the cAMP response element-binding protein (CREB) shut-off signaling pathway. Stimulates outgrowth of olfactory axons and migration of gonadotropin-releasing hormone (GnRH) and luteinizing-hormone-releasing hormone (LHRH) neuronal cells. This chain is NMDA receptor synaptonuclear signaling and neuronal migration factor (Nsmf), found in Rattus norvegicus (Rat).